Consider the following 200-residue polypeptide: NADH-quinone oxidoreductase subunit C (200 aa).

It belongs to the complex I 30 kDa subunit family. As to quaternary structure, NDH-1 is composed of 14 different subunits. Subunits NuoB, C, D, E, F, and G constitute the peripheral sector of the complex.

Its subcellular location is the cell inner membrane. The catalysed reaction is a quinone + NADH + 5 H(+)(in) = a quinol + NAD(+) + 4 H(+)(out). Functionally, NDH-1 shuttles electrons from NADH, via FMN and iron-sulfur (Fe-S) centers, to quinones in the respiratory chain. The immediate electron acceptor for the enzyme in this species is believed to be ubiquinone. Couples the redox reaction to proton translocation (for every two electrons transferred, four hydrogen ions are translocated across the cytoplasmic membrane), and thus conserves the redox energy in a proton gradient. This chain is NADH-quinone oxidoreductase subunit C, found in Paraburkholderia xenovorans (strain LB400).